The primary structure comprises 378 residues: N-acetyldiaminopimelate deacetylase (378 aa).

Aspartate 72 is an active-site residue. Glutamate 131 (proton acceptor) is an active-site residue.

The protein belongs to the peptidase M20A family. N-acetyldiaminopimelate deacetylase subfamily.

The catalysed reaction is N-acetyl-(2S,6S)-2,6-diaminopimelate + H2O = (2S,6S)-2,6-diaminopimelate + acetate. It functions in the pathway amino-acid biosynthesis; L-lysine biosynthesis via DAP pathway; LL-2,6-diaminopimelate from (S)-tetrahydrodipicolinate (acetylase route): step 3/3. Its function is as follows. Catalyzes the conversion of N-acetyl-diaminopimelate to diaminopimelate and acetate. In Enterococcus faecalis (strain ATCC 700802 / V583), this protein is N-acetyldiaminopimelate deacetylase.